A 596-amino-acid chain; its full sequence is uncharacterized protein (596 aa).

An N-terminal signal peptide occupies residues 1 to 20; sequence MRYKPLLLALMLVFSTPAVA. Basic and acidic residues-rich tracts occupy residues 25 to 90 and 161 to 184; these read AHNR…KEAT and VRSDKNGKAVKQDKKYREEKNAKT. A disordered region spans residues 25–184; the sequence is AHNRSAEVKK…KYREEKNAKT (160 aa). Coiled-coil stretches lie at residues 177-281 and 318-454; these read REEK…RFVS and NREV…TAED.

This sequence belongs to the peptidase M23B family.

This is an uncharacterized protein from Neisseria meningitidis serogroup B (strain ATCC BAA-335 / MC58).